The following is a 197-amino-acid chain: Probable GTP-binding protein EngB (197 aa).

The 173-residue stretch at 25–197 (SAPEIAFAGR…VRDEFFKFTR (173 aa)) folds into the EngB-type G domain. GTP contacts are provided by residues 33–40 (GRSNVGKS), 60–64 (GCTRQ), 79–82 (DLPG), 146–149 (TKID), and 177–179 (MSI). The Mg(2+) site is built by Ser40 and Thr62.

The protein belongs to the TRAFAC class TrmE-Era-EngA-EngB-Septin-like GTPase superfamily. EngB GTPase family. The cofactor is Mg(2+).

Necessary for normal cell division and for the maintenance of normal septation. This chain is Probable GTP-binding protein EngB, found in Wolbachia pipientis wMel.